The primary structure comprises 329 residues: Diaminopimelate epimerase (329 aa).

Positions 14 and 73 each coordinate substrate. Cysteine 82 (proton donor) is an active-site residue. Substrate is bound by residues 83–84 (GN), asparagine 170, asparagine 206, and 224–225 (ER). Cysteine 233 (proton acceptor) is an active-site residue. Substrate is bound at residue 234–235 (GT).

The protein belongs to the diaminopimelate epimerase family. In terms of assembly, homodimer.

The protein localises to the cytoplasm. The catalysed reaction is (2S,6S)-2,6-diaminopimelate = meso-2,6-diaminopimelate. The protein operates within amino-acid biosynthesis; L-lysine biosynthesis via DAP pathway; DL-2,6-diaminopimelate from LL-2,6-diaminopimelate: step 1/1. Functionally, catalyzes the stereoinversion of LL-2,6-diaminopimelate (L,L-DAP) to meso-diaminopimelate (meso-DAP), a precursor of L-lysine and an essential component of the bacterial peptidoglycan. The polypeptide is Diaminopimelate epimerase (Listeria monocytogenes serotype 4b (strain CLIP80459)).